Consider the following 380-residue polypeptide: Putative glutamate--cysteine ligase 2-1 (380 aa).

Belongs to the glutamate--cysteine ligase type 2 family. YbdK subfamily.

The catalysed reaction is L-cysteine + L-glutamate + ATP = gamma-L-glutamyl-L-cysteine + ADP + phosphate + H(+). Functionally, ATP-dependent carboxylate-amine ligase which exhibits weak glutamate--cysteine ligase activity. The chain is Putative glutamate--cysteine ligase 2-1 from Mycolicibacterium vanbaalenii (strain DSM 7251 / JCM 13017 / BCRC 16820 / KCTC 9966 / NRRL B-24157 / PYR-1) (Mycobacterium vanbaalenii).